We begin with the raw amino-acid sequence, 325 residues long: Tetraacyldisaccharide 4'-kinase (325 aa).

ATP is bound at residue 55–62 (TAGGNGKT).

The protein belongs to the LpxK family.

The enzyme catalyses a lipid A disaccharide + ATP = a lipid IVA + ADP + H(+). It participates in glycolipid biosynthesis; lipid IV(A) biosynthesis; lipid IV(A) from (3R)-3-hydroxytetradecanoyl-[acyl-carrier-protein] and UDP-N-acetyl-alpha-D-glucosamine: step 6/6. In terms of biological role, transfers the gamma-phosphate of ATP to the 4'-position of a tetraacyldisaccharide 1-phosphate intermediate (termed DS-1-P) to form tetraacyldisaccharide 1,4'-bis-phosphate (lipid IVA). In Salmonella newport (strain SL254), this protein is Tetraacyldisaccharide 4'-kinase.